The primary structure comprises 1227 residues: DNA-directed RNA polymerase subunit beta' (1227 aa).

Residues C60, C62, C75, and C78 each contribute to the Zn(2+) site. Mg(2+) contacts are provided by D449, D451, and D453. C847, C921, C928, and C931 together coordinate Zn(2+).

The protein belongs to the RNA polymerase beta' chain family. The RNAP catalytic core consists of 2 alpha, 1 beta, 1 beta' and 1 omega subunit. When a sigma factor is associated with the core the holoenzyme is formed, which can initiate transcription. The cofactor is Mg(2+). Zn(2+) is required as a cofactor.

The catalysed reaction is RNA(n) + a ribonucleoside 5'-triphosphate = RNA(n+1) + diphosphate. In terms of biological role, DNA-dependent RNA polymerase catalyzes the transcription of DNA into RNA using the four ribonucleoside triphosphates as substrates. The sequence is that of DNA-directed RNA polymerase subunit beta' from Lysinibacillus sphaericus (strain C3-41).